The following is a 1826-amino-acid chain: Protein TIC 214 (1826 aa).

The next 5 membrane-spanning stretches (helical) occupy residues I18–G38, F67–L87, L127–L147, V175–I195, and I221–I241. The disordered stretch occupies residues T250–V308. Acidic residues-rich tracts occupy residues E252–T266 and E293–E304. Residues L774–V794 traverse the membrane as a helical segment. Residues T1032–K1057 are disordered. The segment covering N1042–K1057 has biased composition (basic residues). The helical transmembrane segment at F1081–I1101 threads the bilayer.

It belongs to the TIC214 family. As to quaternary structure, part of the Tic complex.

The protein resides in the plastid. It is found in the chloroplast inner membrane. Functionally, involved in protein precursor import into chloroplasts. May be part of an intermediate translocation complex acting as a protein-conducting channel at the inner envelope. The polypeptide is Protein TIC 214 (Daucus carota (Wild carrot)).